The sequence spans 132 residues: Small ribosomal subunit protein uS8 (132 aa).

Belongs to the universal ribosomal protein uS8 family. In terms of assembly, part of the 30S ribosomal subunit. Contacts proteins S5 and S12.

In terms of biological role, one of the primary rRNA binding proteins, it binds directly to 16S rRNA central domain where it helps coordinate assembly of the platform of the 30S subunit. This chain is Small ribosomal subunit protein uS8, found in Coprothermobacter proteolyticus (strain ATCC 35245 / DSM 5265 / OCM 4 / BT).